We begin with the raw amino-acid sequence, 222 residues long: Sororin-like protein (222 aa).

Positions 1-189 (MEAPRSVGGR…VKQEKEDPVS (189 aa)) are disordered. The span at 24 to 33 (SRSSQQSSSS) shows a compositional bias: low complexity. Positions 47–60 (RLVEQTTLKEKPKD) are enriched in basic and acidic residues. The span at 88–105 (ADLASPASAPSRPQTSRS) shows a compositional bias: low complexity. Positions 155–162 (GKKTRQAS) match the Nuclear localization signal motif. Residues 167–179 (KTLKVAPKKRQRT) show a composition bias toward basic residues. Positions 192–214 (CQDYIEKQKAYFAEIDAFELPVE) are C-terminal Sororin domain.

Belongs to the sororin family.

Its subcellular location is the nucleus. In terms of biological role, regulator of sister chromatid cohesion in mitosis stabilizing cohesin complex association with chromatin. Antagonizes the action of WAPL proteins (WAPL1 and WAPL2) which stimulates cohesin dissociation from chromatin, particularly during somatic division in root cells and meiocytes during anaphase I. Required for centromeric sister chromatid cohesion during male meiosis (microsporogenesis). Cohesion ensures that chromosome partitioning is accurate in dividing cells and may play an important role in DNA repair. This chain is Sororin-like protein, found in Arabidopsis thaliana (Mouse-ear cress).